The sequence spans 317 residues: uncharacterized protein (317 aa).

Basic and acidic residues predominate over residues 1-11 (MASAGAERRPG). Residues 1-164 (MASAGAERRP…KAKKRKSLGA (164 aa)) are disordered. A compositionally biased stretch (polar residues) spans 19–34 (GQGQLTEEPGSAQTSE). Composition is skewed to basic and acidic residues over residues 47 to 58 (HEARGTQSEDQR) and 71 to 92 (EGPK…ERGP). Basic residues-rich tracts occupy residues 100 to 110 (RPRHGPKRKPV) and 151 to 161 (KQHKKAKKRKS).

This is an uncharacterized protein from Homo sapiens (Human).